The sequence spans 261 residues: MSDPAVPRRPTLDLRSFTPARVALGRSGASVPTRALLDFTLDHARARDAVHAVFDVPRLLADLGALGLAVTEARSRAADRRDYLRRPDLGRQLDAGSIEALARIASRPCQLAIVIGDGLSAAAVHAHAVALVTRLLPLLAADDAVALGHVVVASGARVALGDQIGAILGARMVVTLIGERPGLSAPDSLGAYLTFAPTPGRTDAERNCVSNIHHAGLSNDEAAFKIAWLLREGLAREVTGVALKDESADRAPRRIGTSLPE.

Adenosylcob(III)alamin-binding residues include V158, E179, and C208.

Belongs to the EutC family. As to quaternary structure, the basic unit is a heterodimer which dimerizes to form tetramers. The heterotetramers trimerize; 6 large subunits form a core ring with 6 small subunits projecting outwards. Adenosylcob(III)alamin serves as cofactor.

The protein localises to the bacterial microcompartment. It catalyses the reaction ethanolamine = acetaldehyde + NH4(+). It participates in amine and polyamine degradation; ethanolamine degradation. In terms of biological role, catalyzes the deamination of various vicinal amino-alcohols to oxo compounds. Allows this organism to utilize ethanolamine as the sole source of nitrogen and carbon in the presence of external vitamin B12. The protein is Ethanolamine ammonia-lyase small subunit of Bradyrhizobium diazoefficiens (strain JCM 10833 / BCRC 13528 / IAM 13628 / NBRC 14792 / USDA 110).